Consider the following 88-residue polypeptide: L-amino-acid oxidase (88 aa).

FAD is bound by residues Glu-74 and 81–86 (GWIDST). 81–82 (GW) is a substrate binding site.

The protein belongs to the flavin monoamine oxidase family. FIG1 subfamily. Homodimer; non-covalently linked. It depends on FAD as a cofactor. Post-translationally, N-glycosylated. Expressed by the venom gland.

The protein resides in the secreted. The enzyme catalyses an L-alpha-amino acid + O2 + H2O = a 2-oxocarboxylate + H2O2 + NH4(+). It carries out the reaction L-leucine + O2 + H2O = 4-methyl-2-oxopentanoate + H2O2 + NH4(+). It catalyses the reaction L-phenylalanine + O2 + H2O = 3-phenylpyruvate + H2O2 + NH4(+). The catalysed reaction is L-tryptophan + O2 + H2O = indole-3-pyruvate + H2O2 + NH4(+). The enzyme catalyses L-methionine + O2 + H2O = 4-methylsulfanyl-2-oxobutanoate + H2O2 + NH4(+). It carries out the reaction L-isoleucine + O2 + H2O = (S)-3-methyl-2-oxopentanoate + H2O2 + NH4(+). It catalyses the reaction L-arginine + O2 + H2O = 5-guanidino-2-oxopentanoate + H2O2 + NH4(+). The catalysed reaction is L-histidine + O2 + H2O = 3-(imidazol-5-yl)pyruvate + H2O2 + NH4(+). The enzyme catalyses L-asparagine + O2 + H2O = 2-oxosuccinamate + H2O2 + NH4(+). It carries out the reaction L-valine + O2 + H2O = 3-methyl-2-oxobutanoate + H2O2 + NH4(+). It catalyses the reaction L-glutamate + O2 + H2O = H2O2 + 2-oxoglutarate + NH4(+). Catalyzes an oxidative deamination of predominantly hydrophobic and aromatic L-amino acids, thus producing hydrogen peroxide that may contribute to the diverse toxic effects of this enzyme. Is highly active on L-Met, L-Leu, L-Phe, L-Ile, and L-Arg, moderately active on L-His, L-Trp, L-Asn, L-Glu, and L-Val, and weakly or not active on L-Gln, L-Lys, L-Asp, L-Ala, L-Tyr, L-Ser, L-Pro, L-Gly, L-Thr, and L-Cys. Exhibits diverse biological activities, such as hemorrhage, hemolysis, edema, apoptosis of vascular endothelial cells or tumor cell lines, antibacterial and antiparasitic activities. In addition, this protein has an ability to induce apoptosis in cultured HeLa and K562 cells, and inhibits ADP-induced platelet aggregation dose-dependently. Effects of snake L-amino oxidases on platelets are controversial, since they either induce aggregation or inhibit agonist-induced aggregation. These different effects are probably due to different experimental conditions. The protein is L-amino-acid oxidase of Vipera berus berus (Common viper).